We begin with the raw amino-acid sequence, 562 residues long: Potassium-transporting ATPase potassium-binding subunit (562 aa).

Transmembrane regions (helical) follow at residues Ala-5–Ser-25, Ala-63–Ala-83, Gly-132–Ile-152, Leu-175–Leu-195, Leu-250–Phe-270, Gln-279–Met-299, Gly-379–Gly-399, Met-416–Leu-436, Val-483–Ile-503, and Leu-526–Ala-546.

Belongs to the KdpA family. In terms of assembly, the system is composed of three essential subunits: KdpA, KdpB and KdpC.

It localises to the cell inner membrane. Functionally, part of the high-affinity ATP-driven potassium transport (or Kdp) system, which catalyzes the hydrolysis of ATP coupled with the electrogenic transport of potassium into the cytoplasm. This subunit binds the periplasmic potassium ions and delivers the ions to the membrane domain of KdpB through an intramembrane tunnel. This is Potassium-transporting ATPase potassium-binding subunit from Pectobacterium atrosepticum (strain SCRI 1043 / ATCC BAA-672) (Erwinia carotovora subsp. atroseptica).